A 152-amino-acid chain; its full sequence is Phospholipase A2 (152 aa).

The first 20 residues, 1–20, serve as a signal peptide directing secretion; it reads MAACHRILLLLSVAVASGAA. Intrachain disulfides connect Cys-39–Cys-96, Cys-53–Cys-142, Cys-55–Cys-70, Cys-69–Cys-124, Cys-75–Cys-149, Cys-76–Cys-117, Cys-85–Cys-110, and Cys-103–Cys-115. Gly-56 and Gly-58 together coordinate Ca(2+). Residue His-73 is part of the active site. Residue Asp-74 coordinates Ca(2+). Residue Asp-118 is part of the active site.

Belongs to the phospholipase A2 family. Expressed by the venom gland. Heavily expressed in the venom gland transcriptome.

The protein resides in the secreted. The enzyme catalyses a 1,2-diacyl-sn-glycero-3-phosphocholine + H2O = a 1-acyl-sn-glycero-3-phosphocholine + a fatty acid + H(+). In terms of biological role, PA2 catalyzes the calcium-dependent hydrolysis of the 2-acyl groups in 3-sn-phosphoglycerides. This is Phospholipase A2 from Meiacanthus atrodorsalis (Forktail blenny).